Reading from the N-terminus, the 159-residue chain is Peptide methionine sulfoxide reductase MsrB (159 aa).

The 124-residue stretch at 14–137 (TEKLKENLTE…NSASLKFIAK (124 aa)) folds into the MsrB domain. Catalysis depends on Cys-126, which acts as the Nucleophile.

It belongs to the MsrB Met sulfoxide reductase family.

It carries out the reaction L-methionyl-[protein] + [thioredoxin]-disulfide + H2O = L-methionyl-(R)-S-oxide-[protein] + [thioredoxin]-dithiol. The protein is Peptide methionine sulfoxide reductase MsrB of Hathewaya histolytica (Clostridium histolyticum).